A 213-amino-acid polypeptide reads, in one-letter code: MGLISYENEAINEVKKADNHHVSKFVTSYYGPSSSSWQSGIWILFVLFVAAVILIILFTFVANRRRRRMGRAPIRGTAWLTPPSYRQSQQQYTGTVQQRTDDYVPEYTETANEHDLGYYDQRGEFHPNDKAAYVAPPPLVQECSSESVNSLERPPAAVVHQANSLDTDYGLTRPSNGRVPAVSDTVEQLERLPGGTTTQEINPPERAKVNARS.

Residues 1-39 are Lumenal-facing; sequence MGLISYENEAINEVKKADNHHVSKFVTSYYGPSSSSWQS. Residues 40-62 form a helical membrane-spanning segment; it reads GIWILFVLFVAAVILIILFTFVA. The Cytoplasmic segment spans residues 63-213; it reads NRRRRRMGRA…PERAKVNARS (151 aa). The PY motif signature appears at 104-107; the sequence is VPEY. Positions 190–213 are disordered; that stretch reads ERLPGGTTTQEINPPERAKVNARS. The span at 203-213 shows a compositional bias: basic and acidic residues; that stretch reads PPERAKVNARS.

In terms of assembly, interacts with PMT4 and WW domain of RSP5.

It localises to the endoplasmic reticulum membrane. In terms of biological role, regulates chitin deposition in the cell wall. This is Protein RCR1 (RCR1) from Saccharomyces cerevisiae (strain ATCC 204508 / S288c) (Baker's yeast).